Consider the following 1141-residue polypeptide: Envelopment polyprotein (1141 aa).

Positions methionine 1–threonine 19 are cleaved as a signal peptide. Residues arginine 20 to threonine 489 lie on the Lumenal side of the membrane. Cystine bridges form between cysteine 29–cysteine 154, cysteine 63–cysteine 160, cysteine 112–cysteine 131, cysteine 136–cysteine 141, cysteine 178–cysteine 188, and cysteine 213–cysteine 252. An N-linked (GlcNAc...) asparagine; by host glycan is attached at asparagine 137. Asparagine 352 is a glycosylation site (N-linked (GlcNAc...) asparagine; by host). Intrachain disulfides connect cysteine 381–cysteine 440, cysteine 385–cysteine 394, cysteine 410–cysteine 429, and cysteine 457–cysteine 480. Asparagine 404 is a glycosylation site (N-linked (GlcNAc...) asparagine; by host). A helical transmembrane segment spans residues isoleucine 490 to isoleucine 510. Over isoleucine 511 to cysteine 632 the chain is Cytoplasmic. The tract at residues cysteine 521 to lysine 538 is binding to the ribonucleoprotein. 2 CCHC-type zinc fingers span residues cysteine 550–cysteine 570 and cysteine 575–cysteine 596. 3 binding to the ribonucleoprotein regions span residues phenylalanine 593–leucine 610, lysine 597–lysine 608, and lysine 616–serine 630. The inhibition of interferon induction stretch occupies residues threonine 612–alanine 653. Positions lysine 616–cysteine 639 constitute an ITAM domain. Tyrosine 620 and tyrosine 633 each carry phosphotyrosine. The YxxL signature appears at tyrosine 620–leucine 623. The chain crosses the membrane as a helical span at residues tyrosine 633 to alanine 653. Topologically, residues glutamate 654–asparagine 1109 are lumenal. 8 cysteine pairs are disulfide-bonded: cysteine 740–cysteine 775, cysteine 744–cysteine 782, cysteine 756–cysteine 889, cysteine 770–cysteine 900, cysteine 785–cysteine 908, cysteine 811–cysteine 820, cysteine 828–cysteine 837, and cysteine 868–cysteine 872. The segment at phenylalanine 762 to cysteine 782 is fusion loop. Residue asparagine 932 is glycosylated (N-linked (GlcNAc...) asparagine; by host). Intrachain disulfides connect cysteine 974-cysteine 1004, cysteine 997-cysteine 1049, cysteine 1014-cysteine 1019, cysteine 1050-cysteine 1055, and cysteine 1089-cysteine 1093. A helical membrane pass occupies residues tryptophan 1110–cysteine 1130. The tract at residues leucine 1126–lysine 1141 is binding to the ribonucleoprotein. Residues cysteine 1131–lysine 1141 are Cytoplasmic-facing.

It belongs to the hantavirus envelope glycoprotein family. As to quaternary structure, homodimer. Homotetramer; forms heterotetrameric Gn-Gc spikes in the pre-fusion conformation. Interacts (via C-terminus) with the nucleoprotein. Interacts with host TUFM; this interaction contributes to the virus-induced degradation of mitochondria by autophagy, which leads to degradation of host MAVS and inhibition of type I interferon (IFN) responses. Interacts with host MAP1LC3B; this interaction contributes to the virus-induced degradation of mitochondria by autophagy, which leads to degradation of host MAVS and inhibition of type I interferon (IFN) responses. Homodimer. Homotetramer; forms heterotetrameric Gn-Gc spikes in the pre-fusion conformation. Homotrimer; forms homotrimer in the post-fusion conformation at acidic pH. Interacts (via C-terminus) with the nucleoprotein. Post-translationally, envelope polyprotein precursor is quickly cleaved in vivo just after synthesis, presumably by host signal peptidase.

The protein resides in the virion membrane. It is found in the host cell surface. It localises to the host Golgi apparatus membrane. Its subcellular location is the host endoplasmic reticulum membrane. The protein localises to the host mitochondrion. Functionally, forms homotetramers with glycoprotein C at the surface of the virion. Attaches the virion to host cell receptors including integrin alpha5/ITGB1. This attachment induces virion internalization predominantly through clathrin-dependent endocytosis. Mediates the assembly and budding of infectious virus particles through its interaction with the nucleocapsid protein and the viral genome. May dysregulate normal immune and endothelial cell responses through an ITAM motif. Translocates to mitochondria, binds to host TUFM and recruits MAP1LC3B. These interactions induce mitochondrial autophagy and therefore destruction of host MAVS leading to inhibition of type I interferon (IFN) responses. Concomitant breakdown of glycoprotein N is apparently prevented by the nucleoprotein that may inhibit Gn-stimulated autophagosome-lysosome fusion. Interacts with the viral genomic RNA. Inhibits the host RIG-I/TBK1 pathway by disrupting the formation of TBK1-TRAF3 complexes and downstream signaling responses required for IFN-beta transcription. Its function is as follows. Forms homotetramers with glycoprotein N at the surface of the virion. Attaches the virion to host cell receptors including integrin ITGAV/ITGB3. This attachment induces virion internalization predominantly through clathrin-dependent endocytosis. Class II fusion protein that promotes fusion of viral membrane with host endosomal membrane after endocytosis of the virion. This Tula orthohantavirus (TULV) protein is Envelopment polyprotein (GP).